The primary structure comprises 775 residues: Kazrin (775 aa).

Positions 38–66 are disordered; the sequence is AELSGGGGPGPGPGAAASASAAGDSAATN. Low complexity predominate over residues 51-64; that stretch reads GAAASASAAGDSAA. The stretch at 74–256 forms a coiled coil; that stretch reads AQVLLREEVS…LATLTKDVPK (183 aa). The tract at residues 174–333 is interaction with PPL; the sequence is RDFIRNYEQH…SAAEGDRSST (160 aa). Residues 290–427 are disordered; the sequence is QQTLYHSHPP…QSLSLSEGEE (138 aa). A phosphoserine mark is found at S352, S367, and S387. Residues 411–422 are compositionally biased toward polar residues; that stretch reads SQCSPTRQSLSL. SAM domains lie at 446–511, 524–588, and 612–679; these read WKAG…YRDA, DHHW…LYQV, and WTNQ…SAVF. Disordered regions lie at residues 688–715 and 729–762; these read REAE…SSGL and RGFS…LEQC. The segment covering 732-742 has biased composition (basic and acidic residues); it reads SSKDPDFHDDY.

It belongs to the kazrin family. Isoform 2, isoform 3 and isoform 4 interact with PPL N-terminus. As to expression, isoform 2, isoform 3 and isoform 4 are expressed in several cell lines including keratinocytes and bladder and epidermoid carcinoma (at protein level). Isoform 2, isoform 3 and isoform 4 are expressed in hair follicle and interfollicular epidermis (at protein level).

Its subcellular location is the cytoplasm. The protein resides in the cytoskeleton. It is found in the cell junction. The protein localises to the desmosome. It localises to the nucleus. Component of the cornified envelope of keratinocytes. May be involved in the interplay between adherens junctions and desmosomes. The function in the nucleus is not known. This chain is Kazrin, found in Homo sapiens (Human).